Here is a 125-residue protein sequence, read N- to C-terminus: Ribonuclease P protein component (125 aa).

The protein belongs to the RnpA family. Consists of a catalytic RNA component (M1 or rnpB) and a protein subunit.

The enzyme catalyses Endonucleolytic cleavage of RNA, removing 5'-extranucleotides from tRNA precursor.. Functionally, RNaseP catalyzes the removal of the 5'-leader sequence from pre-tRNA to produce the mature 5'-terminus. It can also cleave other RNA substrates such as 4.5S RNA. The protein component plays an auxiliary but essential role in vivo by binding to the 5'-leader sequence and broadening the substrate specificity of the ribozyme. This is Ribonuclease P protein component from Clostridium botulinum (strain Alaska E43 / Type E3).